Reading from the N-terminus, the 463-residue chain is Elongation factor 1-alpha 2 (463 aa).

Residue G2 is modified to N,N,N-trimethylglycine. A tr-type G domain is found at 5-242; that stretch reads KTHINIVVIG…DTILPPTRPT (238 aa). Residues 14-21 are G1; the sequence is GHVDSGKS. GTP is bound by residues D17, S18, G19, K20, S21, and T22. D17 is a Mg(2+) binding site. K36 carries the post-translational modification N6,N6,N6-trimethyllysine; alternate. K36 is subject to N6,N6-dimethyllysine; alternate. At K36 the chain carries N6-methyllysine; alternate. K55 is modified (N6,N6,N6-trimethyllysine). At K55 the chain carries N6,N6-dimethyllysine. Residues 70 to 74 form a G2 region; sequence GITID. The residue at position 79 (K79) is an N6,N6,N6-trimethyllysine. The tract at residues 91-94 is G3; the sequence is DAPG. Positions 153, 154, and 156 each coordinate GTP. The tract at residues 153 to 156 is G4; the sequence is NKMD. S163 carries the phosphoserine modification. K165 bears the N6,N6-dimethyllysine; alternate mark. N6-methyllysine; alternate is present on K165. The residue at position 165 (K165) is an N6,N6,N6-trimethyllysine; alternate; by EEF1AKMT3. Residue K179 is modified to N6-acetyllysine. Positions 194, 195, and 196 each coordinate GTP. The interval 194–196 is G5; that stretch reads SGW. A Phosphoserine modification is found at S224. Position 239 is a phosphothreonine (T239). E301 and E374 each carry 5-glutamyl glycerylphosphorylethanolamine. K439 carries the post-translational modification N6-acetyllysine. The interval 444–463 is disordered; that stretch reads KSGGAGKVTKSAQKAQKAGK.

It belongs to the TRAFAC class translation factor GTPase superfamily. Classic translation factor GTPase family. EF-Tu/EF-1A subfamily. As to quaternary structure, homodimer; arranged in a 'head to tail' dimer configuration. Post-translationally, trimethylated at Lys-165 by EEF1AKMT3. Mono-, di-, and trimethylated at Lys-36 by EEF1AKMT4; trimethylated form is predominant. Methylation by EEF1AKMT4 contributes to the fine-tuning of translation rates for a subset of tRNAs. Trimethylated at the N-terminus and dimethylated at Lys-55 by METTL13.

The protein localises to the endoplasmic reticulum membrane. The catalysed reaction is GTP + H2O = GDP + phosphate + H(+). Functionally, translation elongation factor that catalyzes the GTP-dependent binding of aminoacyl-tRNA (aa-tRNA) to the A-site of ribosomes during the elongation phase of protein synthesis. Base pairing between the mRNA codon and the aa-tRNA anticodon promotes GTP hydrolysis, releasing the aa-tRNA from EEF1A1 and allowing its accommodation into the ribosome. The growing protein chain is subsequently transferred from the P-site peptidyl tRNA to the A-site aa-tRNA, extending it by one amino acid through ribosome-catalyzed peptide bond formation. The protein is Elongation factor 1-alpha 2 (EEF1A2) of Bos taurus (Bovine).